A 375-amino-acid polypeptide reads, in one-letter code: Transaldolase (375 aa).

Lysine 145 serves as the catalytic Schiff-base intermediate with substrate.

Belongs to the transaldolase family. Type 2 subfamily.

The protein resides in the cytoplasm. The catalysed reaction is D-sedoheptulose 7-phosphate + D-glyceraldehyde 3-phosphate = D-erythrose 4-phosphate + beta-D-fructose 6-phosphate. The protein operates within carbohydrate degradation; pentose phosphate pathway; D-glyceraldehyde 3-phosphate and beta-D-fructose 6-phosphate from D-ribose 5-phosphate and D-xylulose 5-phosphate (non-oxidative stage): step 2/3. Functionally, transaldolase is important for the balance of metabolites in the pentose-phosphate pathway. This Mycobacterium leprae (strain Br4923) protein is Transaldolase.